We begin with the raw amino-acid sequence, 266 residues long: Large ribosomal subunit protein uL4 (266 aa).

It belongs to the universal ribosomal protein uL4 family. As to quaternary structure, part of the 50S ribosomal subunit.

In terms of biological role, one of the primary rRNA binding proteins, this protein initially binds near the 5'-end of the 23S rRNA. It is important during the early stages of 50S assembly. It makes multiple contacts with different domains of the 23S rRNA in the assembled 50S subunit and ribosome. Forms part of the polypeptide exit tunnel. This Sulfolobus acidocaldarius (strain ATCC 33909 / DSM 639 / JCM 8929 / NBRC 15157 / NCIMB 11770) protein is Large ribosomal subunit protein uL4.